A 36-amino-acid chain; its full sequence is U14-myrmicitoxin-Tb1a (36 aa).

An N-terminal signal peptide occupies residues 1-23; it reads MKIIKLITIFTMMATLMXXVANG. Positions 24 to 25 are excised as a propeptide; the sequence is EP. Residue Gln35 is modified to Glutamine amide.

As to expression, expressed by the venom gland.

It localises to the secreted. Its function is as follows. Venom protein with unknown function. Does not induce paralysis when a high dose is administered by intrathoracic injection into the blowfly Lucilia caesar. This is U14-myrmicitoxin-Tb1a from Tetramorium bicarinatum (Tramp ant).